The following is a 43-amino-acid chain: Alpha-conotoxin-like Leo-A1 (43 aa).

Residues 1-26 constitute a propeptide that is removed on maturation; it reads LTLDRASDDTDVAAEIMSGLIALAID. 2 disulfide bridges follow: Cys28–Cys34 and Cys29–Cys42. A lacks the Ser-Xaa-Pro motif that is crucial for potent interaction with nAChR region spans residues 30–32; it reads SDS.

The protein belongs to the conotoxin A superfamily. Expressed by the venom duct.

Its subcellular location is the secreted. Alpha-conotoxins act on postsynaptic membranes, they bind to the nicotinic acetylcholine receptors (nAChR) and thus inhibit them. Has possibly a distinct nAChR binding mode from other alpha-conotoxins, due to a different three residue motif (lacks the Ser-Xaa-Pro motif). The protein is Alpha-conotoxin-like Leo-A1 of Conus leopardus (Leopard cone).